The sequence spans 205 residues: Outer-membrane lipoprotein LolB (205 aa).

Positions 1-17 (MRLRLFLAASALALLSG) are cleaved as a signal peptide. C18 is lipidated: N-palmitoyl cysteine. C18 carries the S-diacylglycerol cysteine lipid modification.

The protein belongs to the LolB family. As to quaternary structure, monomer.

Its subcellular location is the cell outer membrane. Its function is as follows. Plays a critical role in the incorporation of lipoproteins in the outer membrane after they are released by the LolA protein. The protein is Outer-membrane lipoprotein LolB of Pseudomonas aeruginosa (strain LESB58).